Consider the following 414-residue polypeptide: Cytochrome P450 CYP105Q4 (414 aa).

Residues 1 to 12 are compositionally biased toward polar residues; that stretch reads MSDTLASPSPET. The tract at residues 1-21 is disordered; it reads MSDTLASPSPETASGIPDYPM. Heme contacts are provided by His108, Gln302, Arg304, His361, and Cys363.

Belongs to the cytochrome P450 family. Requires heme as cofactor.

Its function is as follows. Can bind oleic-acid derivatives, amphotericin B like precursors and a variety of nitrogen ligand donors. The polypeptide is Cytochrome P450 CYP105Q4 (Mycobacterium marinum (strain ATCC BAA-535 / M)).